The sequence spans 404 residues: Glycosylated lysosomal membrane protein (404 aa).

Positions 1-35 are cleaved as a signal peptide; it reads MFRCWGPHWGWVPCAPTPWLLLSLLVCSAPFGLQG. The Lumenal portion of the chain corresponds to 36–370; the sequence is EETRQVSMEV…VDIFSPLVLG (335 aa). Residues N64, N85, N94, N133, N157, N166, N185, N228, and N331 are each glycosylated (N-linked (GlcNAc...) asparagine). Residues 371–391 form a helical membrane-spanning segment; that stretch reads IMAVALGAPGLMFLGGGLFLL. The Cytoplasmic portion of the chain corresponds to 392–404; it reads LRHRRYSEYQSIN. A Lysosomal targeting motif motif is present at residues 400 to 404; that stretch reads YQSIN.

Belongs to the GLMP family. As to quaternary structure, interacts (via lumenal domain) with lysosomal protein MFSD1; the interaction starts while both proteins are still in the endoplasmic reticulum and is required for stabilization of MFSD1 in lysosomes but has no direct effect on its targeting to lysosomes or transporter activity. Post-translationally, highly N-glycosylated. N-glycosylation is essential for GLMP stability and for MFSD1 lysosomal localization. As to expression, detected in brain, heart, liver, kidney, lung, intestine, testis and spleen. Expressed at highest levels in kidney cortex. However, another study reports highest expression levels in lung. Expressed in myoblasts with expression increasing during differentiation into myotubes.

It localises to the lysosome membrane. Its function is as follows. Required to protect lysosomal transporter MFSD1 from lysosomal proteolysis and for MFSD1 lysosomal localization. This chain is Glycosylated lysosomal membrane protein, found in Mus musculus (Mouse).